The following is a 338-amino-acid chain: Ribosomal RNA small subunit methyltransferase C (338 aa).

Belongs to the methyltransferase superfamily. RsmC family. In terms of assembly, monomer.

The protein localises to the cytoplasm. The catalysed reaction is guanosine(1207) in 16S rRNA + S-adenosyl-L-methionine = N(2)-methylguanosine(1207) in 16S rRNA + S-adenosyl-L-homocysteine + H(+). Its function is as follows. Specifically methylates the guanine in position 1207 of 16S rRNA in the 30S particle. This Buchnera aphidicola subsp. Acyrthosiphon pisum (strain APS) (Acyrthosiphon pisum symbiotic bacterium) protein is Ribosomal RNA small subunit methyltransferase C.